A 417-amino-acid polypeptide reads, in one-letter code: Phosphoglycerate kinase (417 aa).

Residues aspartate 24–asparagine 26, arginine 44, histidine 67–arginine 70, arginine 126, and arginine 170 contribute to the substrate site. ATP-binding positions include lysine 220, glycine 316, glutamate 347, and glycine 373–serine 376.

It belongs to the phosphoglycerate kinase family. In terms of assembly, monomer.

Its subcellular location is the cytoplasm. It carries out the reaction (2R)-3-phosphoglycerate + ATP = (2R)-3-phospho-glyceroyl phosphate + ADP. Its pathway is carbohydrate degradation; glycolysis; pyruvate from D-glyceraldehyde 3-phosphate: step 2/5. This Renibacterium salmoninarum (strain ATCC 33209 / DSM 20767 / JCM 11484 / NBRC 15589 / NCIMB 2235) protein is Phosphoglycerate kinase.